We begin with the raw amino-acid sequence, 496 residues long: Acetyl-coenzyme A carboxylase carboxyl transferase subunit beta, chloroplastic (496 aa).

Positions 229–496 (LWVQCENCYG…FFPLNKNFIK (268 aa)) constitute a CoA carboxyltransferase N-terminal domain. Zn(2+)-binding residues include C233, C236, C252, and C255. The C4-type zinc-finger motif lies at 233 to 255 (CENCYGLNYKKFFRLKLHICEQC).

This sequence belongs to the AccD/PCCB family. As to quaternary structure, acetyl-CoA carboxylase is a heterohexamer composed of biotin carboxyl carrier protein, biotin carboxylase and 2 subunits each of ACCase subunit alpha and ACCase plastid-coded subunit beta (accD). The cofactor is Zn(2+).

It is found in the plastid. The protein localises to the chloroplast stroma. It catalyses the reaction N(6)-carboxybiotinyl-L-lysyl-[protein] + acetyl-CoA = N(6)-biotinyl-L-lysyl-[protein] + malonyl-CoA. The protein operates within lipid metabolism; malonyl-CoA biosynthesis; malonyl-CoA from acetyl-CoA: step 1/1. Component of the acetyl coenzyme A carboxylase (ACC) complex. Biotin carboxylase (BC) catalyzes the carboxylation of biotin on its carrier protein (BCCP) and then the CO(2) group is transferred by the transcarboxylase to acetyl-CoA to form malonyl-CoA. This Ranunculus macranthus (Large buttercup) protein is Acetyl-coenzyme A carboxylase carboxyl transferase subunit beta, chloroplastic.